A 204-amino-acid chain; its full sequence is 8-oxoguanine DNA glycosylase/AP lyase (204 aa).

Active-site residues include Lys-129 and Asp-147.

It belongs to the type-2 OGG1 family.

It carries out the reaction 2'-deoxyribonucleotide-(2'-deoxyribose 5'-phosphate)-2'-deoxyribonucleotide-DNA = a 3'-end 2'-deoxyribonucleotide-(2,3-dehydro-2,3-deoxyribose 5'-phosphate)-DNA + a 5'-end 5'-phospho-2'-deoxyribonucleoside-DNA + H(+). In terms of biological role, catalyzes the excision of an oxidatively damaged form of guanine (7,8-dihydro-8-oxoguanine = 8-oxoG) from DNA. Also cleaves the DNA backbone at apurinic/apyrimidinic sites (AP sites). This is 8-oxoguanine DNA glycosylase/AP lyase from Thermoplasma acidophilum (strain ATCC 25905 / DSM 1728 / JCM 9062 / NBRC 15155 / AMRC-C165).